The chain runs to 292 residues: Undecaprenyl-diphosphatase 2 (292 aa).

The next 5 helical transmembrane spans lie at 89–109 (WLVI…QDAI), 118–138 (LIAT…WYAS), 203–223 (FLLA…SIGG), 232–252 (PTIL…AWFL), and 263–283 (FVLY…GGAL).

Belongs to the UppP family.

The protein localises to the cell membrane. The catalysed reaction is di-trans,octa-cis-undecaprenyl diphosphate + H2O = di-trans,octa-cis-undecaprenyl phosphate + phosphate + H(+). Functionally, catalyzes the dephosphorylation of undecaprenyl diphosphate (UPP). Confers resistance to bacitracin. The polypeptide is Undecaprenyl-diphosphatase 2 (Frankia casuarinae (strain DSM 45818 / CECT 9043 / HFP020203 / CcI3)).